We begin with the raw amino-acid sequence, 242 residues long: Small ribosomal subunit protein uS2 (242 aa).

This sequence belongs to the universal ribosomal protein uS2 family.

This chain is Small ribosomal subunit protein uS2, found in Aeromonas salmonicida (strain A449).